The sequence spans 955 residues: MTRKNTTTNPWAKFHGPNLGYVIEQYDLYVTGAGSVDPELQELFEIFGAPSFQDDVVTGDNTATHFSPQNTGNIEKILKVVQLVEQIRSFGHTLAHINPMEDAANGQSLLEKAMNELSDADLKAIPAKTVWQDAPEGIHTALDVIHRLKEVYTQSLAYEFSHIQDSEERAWLHQMVESNSLRQPLSNKKRTALLKRLTAVEGFEQFLHKTFVGQKRFSIEGVDMLVPVLDEIVLEGAKNGVEDVMIGMAHRGRLSVLAHVLEKPYSHMFAEFKHAKIEGAVANSGWTGDVKYHLGREQVVSNEEVSTRVTLANNPSHLEFVNPVVEGFARAAQENRKKSGLPEQDTSKSFVILVHGDAAFPGQGIVSETLNLSRLNAYQTGGTIHVIANNAVGFTTDSYDSRSTKYSSDLAKGFDIPIVHVNADDPEACLAAANLAIQYRMLFKKDFLIDLIGYRRYGHNEMDDPAVTQPQVYKKIKNHPTVRAIYADQLQAAGVLNADEIETITQFTQEQLKSDYAQVPPADTSDATIHVKVPDVVAKGIQPIDTGVELDSLRAINEGLLSWPEGFNVYPKVKKILERRKDALEENGKIEWALAESLAFASILQEGTPIRLTGQDSQRGTFAHRHIVLHDTDTNETYSPLHRLPNINASFSVHNSPLSEAAVVGYEYGYNVFAPETLVMWEAQYGDFSNTAQALFDQYVSAGRAKWGQKSGLVLLLPHGYEGQGPEHSSARPERFLQLAAENNWTVANLTSAAQYFHILRRQASILGTEAVRPLVLMTPKSLLRHPLTLSTANQLSEGRFQPALEQENLGTKPNKVKRLVLSTGKMAIDLAAEIESGRHEYNLDEIHIVRIEQLYPFPAEKVQSIIKRFKNLEEIIWVQEEPRNMGAWHYMAPILFELAGDKVKTGYIGRPDRSSPSGGDPFAHKAEQELIVSHALDVKYNFRQDKLEIEVFSN.

Belongs to the alpha-ketoglutarate dehydrogenase family. Homodimer. Part of the 2-oxoglutarate dehydrogenase (OGDH) complex composed of E1 (2-oxoglutarate dehydrogenase), E2 (dihydrolipoamide succinyltransferase) and E3 (dihydrolipoamide dehydrogenase); the complex contains multiple copies of the three enzymatic components (E1, E2 and E3). The cofactor is thiamine diphosphate.

It carries out the reaction N(6)-[(R)-lipoyl]-L-lysyl-[protein] + 2-oxoglutarate + H(+) = N(6)-[(R)-S(8)-succinyldihydrolipoyl]-L-lysyl-[protein] + CO2. E1 component of the 2-oxoglutarate dehydrogenase (OGDH) complex which catalyzes the decarboxylation of 2-oxoglutarate, the first step in the conversion of 2-oxoglutarate to succinyl-CoA and CO(2). This is 2-oxoglutarate dehydrogenase E1 component from Bacillus anthracis (strain A0248).